A 527-amino-acid chain; its full sequence is Bifunctional purine biosynthesis protein PurH (527 aa).

Positions A8–V156 constitute an MGS-like domain.

Belongs to the PurH family.

The catalysed reaction is (6R)-10-formyltetrahydrofolate + 5-amino-1-(5-phospho-beta-D-ribosyl)imidazole-4-carboxamide = 5-formamido-1-(5-phospho-D-ribosyl)imidazole-4-carboxamide + (6S)-5,6,7,8-tetrahydrofolate. The enzyme catalyses IMP + H2O = 5-formamido-1-(5-phospho-D-ribosyl)imidazole-4-carboxamide. It participates in purine metabolism; IMP biosynthesis via de novo pathway; 5-formamido-1-(5-phospho-D-ribosyl)imidazole-4-carboxamide from 5-amino-1-(5-phospho-D-ribosyl)imidazole-4-carboxamide (10-formyl THF route): step 1/1. The protein operates within purine metabolism; IMP biosynthesis via de novo pathway; IMP from 5-formamido-1-(5-phospho-D-ribosyl)imidazole-4-carboxamide: step 1/1. The protein is Bifunctional purine biosynthesis protein PurH of Mycobacterium sp. (strain KMS).